The sequence spans 456 residues: Histidine--tRNA ligase (456 aa).

The span at 1–11 (MTQNENPSAQS) shows a compositional bias: polar residues. A disordered region spans residues 1 to 22 (MTQNENPSAQSGAKPEDKARPA).

This sequence belongs to the class-II aminoacyl-tRNA synthetase family. Homodimer.

Its subcellular location is the cytoplasm. The enzyme catalyses tRNA(His) + L-histidine + ATP = L-histidyl-tRNA(His) + AMP + diphosphate + H(+). This chain is Histidine--tRNA ligase, found in Cupriavidus pinatubonensis (strain JMP 134 / LMG 1197) (Cupriavidus necator (strain JMP 134)).